Here is a 676-residue protein sequence, read N- to C-terminus: DNA ligase (676 aa).

NAD(+)-binding positions include 35-39 (DAVYD), 84-85 (SL), and Glu115. Catalysis depends on Lys117, which acts as the N6-AMP-lysine intermediate. NAD(+) contacts are provided by Arg138, Glu177, Lys296, and Lys320. Residues Cys414, Cys417, Cys432, and Cys437 each coordinate Zn(2+). The BRCT domain maps to 599–676 (NANLKLVGKT…SEAELLKILA (78 aa)).

The protein belongs to the NAD-dependent DNA ligase family. LigA subfamily. Mg(2+) is required as a cofactor. It depends on Mn(2+) as a cofactor.

It carries out the reaction NAD(+) + (deoxyribonucleotide)n-3'-hydroxyl + 5'-phospho-(deoxyribonucleotide)m = (deoxyribonucleotide)n+m + AMP + beta-nicotinamide D-nucleotide.. Functionally, DNA ligase that catalyzes the formation of phosphodiester linkages between 5'-phosphoryl and 3'-hydroxyl groups in double-stranded DNA using NAD as a coenzyme and as the energy source for the reaction. It is essential for DNA replication and repair of damaged DNA. This is DNA ligase from Trichormus variabilis (strain ATCC 29413 / PCC 7937) (Anabaena variabilis).